The sequence spans 261 residues: UPF0246 protein PMI0005 (261 aa).

It belongs to the UPF0246 family.

The sequence is that of UPF0246 protein PMI0005 from Proteus mirabilis (strain HI4320).